A 435-amino-acid chain; its full sequence is Nuclear receptor subfamily 6 group A member 1 (435 aa).

The segment at residues 11-86 (QRACLICGDR…MGMNRKAIRE (76 aa)) is a DNA-binding region (nuclear receptor). NR C4-type zinc fingers lie at residues 14–34 (CLICGDRATGLHYGIISCEGC) and 50–69 (CSRDKNCVMSRKQRNRCQYC). A disordered region spans residues 84–157 (IREDGMPGGR…VSTPSSSRSM (74 aa)). Over residues 121–141 (NTSWSNNGDSDHSSPGNGVSE) the composition is skewed to polar residues. The span at 142 to 156 (SNQPSPVSTPSSSRS) shows a compositional bias: low complexity. In terms of domain architecture, NR LBD spans 204–435 (QSHTLINQLL…HSCKTSLTKE (232 aa)).

Belongs to the nuclear hormone receptor family. NR6 subfamily. Homodimer.

Its subcellular location is the cytoplasm. The protein resides in the nucleus. Probable orphan nuclear receptor. Binds to a response element containing repeats of the motif 5'-AGGTCA-3'. Required for anterior-posterior patterning during organogenesis. Acts with chordin to play a role in patterning the midbrain-hindbrain. Isoform Em is required for integrin-mediated cell matrix interaction during neurulation and for the morphogenetic movements leading to formation of the neural tube. Also mediates the effect of retinoic acid on primary neurogenesis. The sequence is that of Nuclear receptor subfamily 6 group A member 1 from Xenopus tropicalis (Western clawed frog).